Reading from the N-terminus, the 632-residue chain is 1-deoxy-D-xylulose-5-phosphate synthase (632 aa).

Residues H75 and G117 to A119 each bind thiamine diphosphate. D146 provides a ligand contact to Mg(2+). Thiamine diphosphate-binding positions include A147–A148, N175, and E370. Residue N175 coordinates Mg(2+).

It belongs to the transketolase family. DXPS subfamily. Homodimer. Mg(2+) is required as a cofactor. It depends on thiamine diphosphate as a cofactor.

It catalyses the reaction D-glyceraldehyde 3-phosphate + pyruvate + H(+) = 1-deoxy-D-xylulose 5-phosphate + CO2. Its pathway is metabolic intermediate biosynthesis; 1-deoxy-D-xylulose 5-phosphate biosynthesis; 1-deoxy-D-xylulose 5-phosphate from D-glyceraldehyde 3-phosphate and pyruvate: step 1/1. In terms of biological role, catalyzes the acyloin condensation reaction between C atoms 2 and 3 of pyruvate and glyceraldehyde 3-phosphate to yield 1-deoxy-D-xylulose-5-phosphate (DXP). In Chlamydia muridarum (strain MoPn / Nigg), this protein is 1-deoxy-D-xylulose-5-phosphate synthase.